The sequence spans 221 residues: MKRFLILTPMVLALCGCESPALLVQKDDAEFAPPANLVQPATVTEGGGLFQPAYNWSLLQDRRAYRIGDILTVILDESTQSSKQAKTNFGKKNDMSLGVPEVLGKKLNKFGGSISGKRDFDGSATSAQQNMLRGSITVAVHQVLPNGVLVIRGEKWLTLNQGDEYMRVTGLVRADDVARDNSVSSQRIANARISYAGRGALSDANSAGWLTRFFNHPLFPI.

The N-terminal stretch at 1–16 (MKRFLILTPMVLALCG) is a signal peptide. A lipid anchor (N-palmitoyl cysteine) is attached at C17. C17 carries S-diacylglycerol cysteine lipidation.

It belongs to the FlgH family. The basal body constitutes a major portion of the flagellar organelle and consists of four rings (L,P,S, and M) mounted on a central rod.

It is found in the cell outer membrane. It localises to the bacterial flagellum basal body. Its function is as follows. Assembles around the rod to form the L-ring and probably protects the motor/basal body from shearing forces during rotation. In Yersinia pseudotuberculosis serotype I (strain IP32953), this protein is Flagellar L-ring protein 2.